The following is a 109-amino-acid chain: MHNISAKKFLGYLKNKCLEFGVKVIEGNPAYTSIKCPNCGSRLSQLYKLADERALPSRLMYCFDCGFYADRDTVAVFNLIKRFTGLYPFSPKSNEPIAEGTVFPDEAMG.

Zn(2+) is bound by residues Cys36, Cys39, Cys62, and Cys65.

This sequence belongs to the transposase 35 family.

The polypeptide is Putative transposase MJ0856.1 (Methanocaldococcus jannaschii (strain ATCC 43067 / DSM 2661 / JAL-1 / JCM 10045 / NBRC 100440) (Methanococcus jannaschii)).